Reading from the N-terminus, the 218-residue chain is Sodium channel regulatory subunit beta-1 (218 aa).

The first 18 residues, 1–18, serve as a signal peptide directing secretion; that stretch reads MGTLLALVVGAALVSSAW. Residues 19–157 lie on the Extracellular side of the membrane; it reads GGCVEVDSET…DKANRDMASI (139 aa). Disulfide bonds link C21/C43 and C40/C121. One can recognise an Ig-like C2-type domain in the interval 22 to 150; it reads VEVDSETEAV…KIHIEVVDKA (129 aa). Residues N93, N110, N114, and N135 are each glycosylated (N-linked (GlcNAc...) asparagine). The helical transmembrane segment at 158–179 threads the bilayer; sequence VSEIMMYVLIVVLTIWLVAEMV. Residues 180–218 are Cytoplasmic-facing; that stretch reads YCYKKIAAATEAAAQENASEYLAITSESKENCTGVQVAE.

Belongs to the sodium channel auxiliary subunit SCN1B (TC 8.A.17) family. In terms of assembly, a voltage-gated sodium (Nav) channel consists of an ion-conducting pore-forming alpha subunit functional on its own that is regulated by one or more beta subunits. Interacts with SCN1A; regulatory subunit of SCN1A/Nav1.1. Interacts with SCN3A; regulatory subunit of SCN3A/Nav1.3. Interacts with SCN4A; regulatory subunit of SCN4A/Nav1.4. Interacts with SCN5A; regulatory subunit of SCN5A/Nav1.5. Interacts with SCN8A; regulatory subunit of SCN8A/Nav1.6. Interacts with SCN9A; regulatory subunit of SCN9A/Nav1.7. Interacts with SCN10A; regulatory subunit of SCN10A/Nav1.8. Interacts with NFASC. Interacts with TMEM65.

The protein localises to the cell membrane. It is found in the perikaryon. It localises to the cell projection. Its subcellular location is the axon. Its function is as follows. Regulatory subunit of multiple voltage-gated sodium (Nav) channels directly mediating the depolarization of excitable membranes. Navs, also called VGSCs (voltage-gated sodium channels) or VDSCs (voltage-dependent sodium channels), operate by switching between closed and open conformations depending on the voltage difference across the membrane. In the open conformation they allow Na(+) ions to selectively pass through the pore, along their electrochemical gradient. The influx of Na+ ions provokes membrane depolarization, initiating the propagation of electrical signals throughout cells and tissues. The accessory beta subunits participate in localization and functional modulation of the Nav channels. Modulates the activity of SCN1A/Nav1.1, SCN2A/Nav1.2, SCN3A/Nav1.3, SCN4A/Nav1.4, SCN5A/Nav1.5, SCN8A/Nav1.6, SCN9A/Nav1.7 and SCN10A/Nav1.8. In Canis lupus familiaris (Dog), this protein is Sodium channel regulatory subunit beta-1.